Reading from the N-terminus, the 396-residue chain is 1-deoxy-D-xylulose 5-phosphate reductoisomerase (396 aa).

5 residues coordinate NADPH: T10, G11, S12, I13, and N123. K124 lines the 1-deoxy-D-xylulose 5-phosphate pocket. Residue E125 participates in NADPH binding. D149 contributes to the Mn(2+) binding site. 1-deoxy-D-xylulose 5-phosphate-binding residues include S150, E151, S185, and H208. E151 contacts Mn(2+). G214 contributes to the NADPH binding site. Residues S221, N226, K227, and E230 each coordinate 1-deoxy-D-xylulose 5-phosphate. Mn(2+) is bound at residue E230.

It belongs to the DXR family. Requires Mg(2+) as cofactor. Mn(2+) is required as a cofactor.

It catalyses the reaction 2-C-methyl-D-erythritol 4-phosphate + NADP(+) = 1-deoxy-D-xylulose 5-phosphate + NADPH + H(+). Its pathway is isoprenoid biosynthesis; isopentenyl diphosphate biosynthesis via DXP pathway; isopentenyl diphosphate from 1-deoxy-D-xylulose 5-phosphate: step 1/6. In terms of biological role, catalyzes the NADPH-dependent rearrangement and reduction of 1-deoxy-D-xylulose-5-phosphate (DXP) to 2-C-methyl-D-erythritol 4-phosphate (MEP). This is 1-deoxy-D-xylulose 5-phosphate reductoisomerase from Shewanella baltica (strain OS223).